An 85-amino-acid chain; its full sequence is Putative membrane protein insertion efficiency factor (85 aa).

Belongs to the UPF0161 family.

Its subcellular location is the cell inner membrane. Functionally, could be involved in insertion of integral membrane proteins into the membrane. This is Putative membrane protein insertion efficiency factor from Escherichia fergusonii (strain ATCC 35469 / DSM 13698 / CCUG 18766 / IAM 14443 / JCM 21226 / LMG 7866 / NBRC 102419 / NCTC 12128 / CDC 0568-73).